The following is a 408-amino-acid chain: CinA-like protein (408 aa).

The protein belongs to the CinA family.

This chain is CinA-like protein, found in Anaeromyxobacter sp. (strain K).